The chain runs to 224 residues: Ribonuclease 3 (224 aa).

The RNase III domain maps to 5–127 (ANRLQRRLGY…IIGAIYLDSD (123 aa)). A Mg(2+)-binding site is contributed by E40. D44 is a catalytic residue. D113 and E116 together coordinate Mg(2+). E116 is a catalytic residue. Residues 154–224 (DPKTRLQECL…AELALKQLES (71 aa)) enclose the DRBM domain.

It belongs to the ribonuclease III family. As to quaternary structure, homodimer. The cofactor is Mg(2+).

It is found in the cytoplasm. It catalyses the reaction Endonucleolytic cleavage to 5'-phosphomonoester.. Digests double-stranded RNA. Involved in the processing of primary rRNA transcript to yield the immediate precursors to the large and small rRNAs (23S and 16S). Processes some mRNAs, and tRNAs when they are encoded in the rRNA operon. Processes pre-crRNA and tracrRNA of type II CRISPR loci if present in the organism. The protein is Ribonuclease 3 of Photobacterium profundum (strain SS9).